Here is a 125-residue protein sequence, read N- to C-terminus: uncharacterized protein (125 aa).

This sequence belongs to the asfivirus H124R family.

The protein localises to the virion. This is an uncharacterized protein from Ornithodoros (relapsing fever ticks).